Here is a 315-residue protein sequence, read N- to C-terminus: MIGSFLTRGLVMVFGYAYPAYECYKAVEKNKPEMQQLRFWCQYWILVAALTIFERVGDALASWVPLYCEAKLAFFIYLWFPKTRGTTYVYDSFFQPYVAKHENEIDRSLIELRTKAGDLAVIYCRKAVSYGQTRIVEILHFVALQSTPKPKPKEKKQAAAPEEEEQKQPDLKATSQAASSNPQVRLQSKKPQLVTKEPISPKPLSSPRKQQQLQTETKEAKASVSQTKLTTLTPPGPPPPPPPPPPSPTTAAKRNADPAQPSPTEAEEASQTVAALPEPASEIQRASSSKETIMEETLRITRGSLRKARSAGAPR.

The segment at 148 to 315 is disordered; that stretch reads PKPKPKEKKQ…RKARSAGAPR (168 aa). Over residues 173-190 the composition is skewed to polar residues; it reads ATSQAASSNPQVRLQSKK. The span at 234 to 248 shows a compositional bias: pro residues; sequence PPGPPPPPPPPPPSP.

It belongs to the DP1 family.

The protein is HVA22-like protein h (HVA22H) of Arabidopsis thaliana (Mouse-ear cress).